An 85-amino-acid chain; its full sequence is ATP synthase epsilon chain (85 aa).

This sequence belongs to the ATPase epsilon chain family. As to quaternary structure, F-type ATPases have 2 components, CF(1) - the catalytic core - and CF(0) - the membrane proton channel. CF(1) has five subunits: alpha(3), beta(3), gamma(1), delta(1), epsilon(1). CF(0) has three main subunits: a, b and c.

It is found in the cell membrane. In terms of biological role, produces ATP from ADP in the presence of a proton gradient across the membrane. This Frankia casuarinae (strain DSM 45818 / CECT 9043 / HFP020203 / CcI3) protein is ATP synthase epsilon chain.